The chain runs to 543 residues: CTP synthase (543 aa).

Residues 1–265 (MTNYIFVTGG…DQLVVDRFGL (265 aa)) form an amidoligase domain region. Position 13 (Ser-13) interacts with CTP. Ser-13 provides a ligand contact to UTP. Residues 14–19 (SLGKGI) and Asp-71 contribute to the ATP site. Mg(2+) contacts are provided by Asp-71 and Glu-139. CTP is bound by residues 146-148 (DIE), 186-191 (KTKPTQ), and Lys-222. Residues 186-191 (KTKPTQ) and Lys-222 each bind UTP. 238–240 (KDV) is a binding site for ATP. A Glutamine amidotransferase type-1 domain is found at 290–541 (NIGMIGKYVE…VAAAGKYQKE (252 aa)). Position 351 (Gly-351) interacts with L-glutamine. Cys-378 functions as the Nucleophile; for glutamine hydrolysis in the catalytic mechanism. L-glutamine is bound by residues 379–382 (LGMQ), Glu-402, and Arg-469. Catalysis depends on residues His-514 and Glu-516.

This sequence belongs to the CTP synthase family. In terms of assembly, homotetramer.

The enzyme catalyses UTP + L-glutamine + ATP + H2O = CTP + L-glutamate + ADP + phosphate + 2 H(+). It catalyses the reaction L-glutamine + H2O = L-glutamate + NH4(+). It carries out the reaction UTP + NH4(+) + ATP = CTP + ADP + phosphate + 2 H(+). It functions in the pathway pyrimidine metabolism; CTP biosynthesis via de novo pathway; CTP from UDP: step 2/2. Allosterically activated by GTP, when glutamine is the substrate; GTP has no effect on the reaction when ammonia is the substrate. The allosteric effector GTP functions by stabilizing the protein conformation that binds the tetrahedral intermediate(s) formed during glutamine hydrolysis. Inhibited by the product CTP, via allosteric rather than competitive inhibition. Catalyzes the ATP-dependent amination of UTP to CTP with either L-glutamine or ammonia as the source of nitrogen. Regulates intracellular CTP levels through interactions with the four ribonucleotide triphosphates. In Alteromonas mediterranea (strain DSM 17117 / CIP 110805 / LMG 28347 / Deep ecotype), this protein is CTP synthase.